A 382-amino-acid polypeptide reads, in one-letter code: Chorismate synthase (382 aa).

NADP(+)-binding residues include Arg-39 and Arg-45. Residues 128-130 (RAS), 246-247 (QA), Ala-290, 305-309 (KPIAT), and Arg-331 each bind FMN.

It belongs to the chorismate synthase family. As to quaternary structure, homotetramer. FMNH2 serves as cofactor.

It carries out the reaction 5-O-(1-carboxyvinyl)-3-phosphoshikimate = chorismate + phosphate. Its pathway is metabolic intermediate biosynthesis; chorismate biosynthesis; chorismate from D-erythrose 4-phosphate and phosphoenolpyruvate: step 7/7. Catalyzes the anti-1,4-elimination of the C-3 phosphate and the C-6 proR hydrogen from 5-enolpyruvylshikimate-3-phosphate (EPSP) to yield chorismate, which is the branch point compound that serves as the starting substrate for the three terminal pathways of aromatic amino acid biosynthesis. This reaction introduces a second double bond into the aromatic ring system. The sequence is that of Chorismate synthase from Deinococcus geothermalis (strain DSM 11300 / CIP 105573 / AG-3a).